The primary structure comprises 139 residues: Galactoside-binding soluble lectin 13 (139 aa).

Residues 6-138 form the Galectin domain; sequence VPYKLPVSLS…DISLTSVCVC (133 aa).

In terms of assembly, homodimer; disulfide-linked. Detected in adult and fetal spleen, fetal kidney, adult urinary bladder and placenta. Placental expression originates predominantly from the syncytiotrophoblast.

It localises to the cytoplasm. Its subcellular location is the nucleus matrix. Its function is as follows. Binds beta-galactoside and lactose. Strong inducer of T-cell apoptosis. Has hemagglutinating activity towards chicken erythrocytes. This Homo sapiens (Human) protein is Galactoside-binding soluble lectin 13 (LGALS13).